The following is a 349-amino-acid chain: tRNA pseudouridine synthase D (349 aa).

Phe27 provides a ligand contact to substrate. Asp80 (nucleophile) is an active-site residue. Asn129 contributes to the substrate binding site. One can recognise a TRUD domain in the interval 155–303 (GVPNYFGAQR…VEAARRAMLL (149 aa)). Phe329 is a binding site for substrate.

Belongs to the pseudouridine synthase TruD family.

It carries out the reaction uridine(13) in tRNA = pseudouridine(13) in tRNA. Its function is as follows. Responsible for synthesis of pseudouridine from uracil-13 in transfer RNAs. This chain is tRNA pseudouridine synthase D, found in Escherichia coli O6:H1 (strain CFT073 / ATCC 700928 / UPEC).